The chain runs to 428 residues: Cytochrome c biogenesis protein CcsB (428 aa).

The next 3 helical transmembrane spans lie at 14 to 34 (LRFA…GTFI), 72 to 92 (SIWF…CSFR), and 162 to 182 (IGPL…AYGS).

This sequence belongs to the Ccs1/CcsB family. In terms of assembly, may interact with CcsA.

It is found in the cellular thylakoid membrane. Required during biogenesis of c-type cytochromes (cytochrome c6 and cytochrome f) at the step of heme attachment. The chain is Cytochrome c biogenesis protein CcsB from Prochlorococcus marinus (strain MIT 9312).